The primary structure comprises 349 residues: NADP-dependent alcohol dehydrogenase C 1 (349 aa).

C41, H63, C94, C97, C100, C108, and C159 together coordinate Zn(2+). K210 participates in a covalent cross-link: Isoglutamyl lysine isopeptide (Lys-Gln) (interchain with Q-Cter in protein Pup).

The protein belongs to the zinc-containing alcohol dehydrogenase family. Zn(2+) serves as cofactor.

The enzyme catalyses a primary alcohol + NADP(+) = an aldehyde + NADPH + H(+). Prefers aldehydes over alcohols. The polypeptide is NADP-dependent alcohol dehydrogenase C 1 (adhc1) (Mycolicibacterium smegmatis (strain ATCC 700084 / mc(2)155) (Mycobacterium smegmatis)).